The following is a 405-amino-acid chain: Acetyl-CoA decarbonylase/synthase complex subunit delta (405 aa).

The protein belongs to the CdhD family. In terms of assembly, heterodimer of delta and gamma chains. The ACDS complex is made up of alpha, epsilon, beta, gamma and delta chains with a probable stoichiometry of (alpha(2)epsilon(2))(4)-beta(8)-(gamma(1)delta(1))(8).

Functionally, part of a complex that catalyzes the reversible cleavage of acetyl-CoA, allowing autotrophic growth from CO(2). Probably maintains the overall quaternary structure of the ACDS complex. The polypeptide is Acetyl-CoA decarbonylase/synthase complex subunit delta (Methanocaldococcus jannaschii (strain ATCC 43067 / DSM 2661 / JAL-1 / JCM 10045 / NBRC 100440) (Methanococcus jannaschii)).